The chain runs to 562 residues: Putative transport protein PC1_1686 (562 aa).

Helical transmembrane passes span 8–28, 32–52, 66–86, 93–113, 116–136, and 158–178; these read LLNG…LCLG, LGPV…LLGQ, FMLF…SIFF, FMLA…LGKF, WGIG…PVLV, and HLSL…IFGA. RCK C-terminal domains are found at residues 202–288 and 292–373; these read LDAD…NFRD and VFDR…RIGF. 5 helical membrane-spanning segments follow: residues 383 to 403, 406 to 426, 447 to 467, 478 to 498, and 537 to 557; these read LLAF…TIQF, FTFG…LGFL, FGLM…INSS, SGLI…AYVL, and GTYA…VIIW.

Belongs to the AAE transporter (TC 2.A.81) family. YbjL subfamily.

It is found in the cell membrane. The polypeptide is Putative transport protein PC1_1686 (Pectobacterium carotovorum subsp. carotovorum (strain PC1)).